The chain runs to 385 residues: MGMGKDIFEITVNGLKLVVIFLMMVQAVPILVWLERRGSAFIQDRLGPNRVGPLGLVQLLADAVKFLNKENFMPQTAKPFLYYAAPIFALIPGAVAFSAIPLSSPIQVGTFEMFGSTWGPYTFLVQGYDIGVGIVFILGVSSLAAYTLLMAGWGSGNKYTLMGALRASAQTISYELALGLSIVGVIMLYGTFNLTEMTLAQQGPLAFSFLGHTITANWLPNWGIFYQPVGALLFFSAAFAESNRLPFDLAEGESELVGGFHTEYGGFKFNMFFIGEYGHMMIASGLMVLFFFGGYTIPYVSVAELNEWAAGVASTAGKASALVALIHFLVFNIKFGFFMWVFIWVRWTLPRFRYDQLMDLGWKTMLPWALANTIITAFVIYIASL.

8 consecutive transmembrane segments (helical) span residues 14–34 (GLKLVVIFLMMVQAVPILVWL), 80–100 (FLYYAAPIFALIPGAVAFSAI), 130–150 (IGVGIVFILGVSSLAAYTLLM), 172–192 (ISYELALGLSIVGVIMLYGTF), 219–239 (LPNWGIFYQPVGALLFFSAAF), 280–300 (MMIASGLMVLFFFGGYTIPYV), 325–345 (LIHFLVFNIKFGFFMWVFIWV), and 365–385 (MLPWALANTIITAFVIYIASL).

The protein belongs to the complex I subunit 1 family. NDH-1 is composed of 14 different subunits. Subunits NuoA, H, J, K, L, M, N constitute the membrane sector of the complex.

It localises to the cell inner membrane. The enzyme catalyses a quinone + NADH + 5 H(+)(in) = a quinol + NAD(+) + 4 H(+)(out). NDH-1 shuttles electrons from NADH, via FMN and iron-sulfur (Fe-S) centers, to quinones in the respiratory chain. The immediate electron acceptor for the enzyme in this species is believed to be ubiquinone. Couples the redox reaction to proton translocation (for every two electrons transferred, four hydrogen ions are translocated across the cytoplasmic membrane), and thus conserves the redox energy in a proton gradient. This subunit may bind ubiquinone. The protein is NADH-quinone oxidoreductase subunit H of Bdellovibrio bacteriovorus (strain ATCC 15356 / DSM 50701 / NCIMB 9529 / HD100).